Consider the following 280-residue polypeptide: tRNA pseudouridine synthase A (280 aa).

Catalysis depends on aspartate 55, which acts as the Nucleophile. Tyrosine 110 contributes to the substrate binding site.

This sequence belongs to the tRNA pseudouridine synthase TruA family.

It carries out the reaction uridine(38/39/40) in tRNA = pseudouridine(38/39/40) in tRNA. Functionally, formation of pseudouridine at positions 38, 39 and 40 in the anticodon stem and loop of transfer RNAs. The sequence is that of tRNA pseudouridine synthase A from Methanosphaerula palustris (strain ATCC BAA-1556 / DSM 19958 / E1-9c).